Here is a 198-residue protein sequence, read N- to C-terminus: Vacuolar iron transporter homolog 4 (198 aa).

At 1-32 (MESNNNNLNLDMEKDQETTFDYSKRAQWLRAA) the chain is on the cytoplasmic side. Residues 33 to 53 (VLGANDGLVSTASLMMGIGAV) form a helical membrane-spanning segment. Residues 54–60 (KQDVRIM) lie on the Vacuolar side of the membrane. Residues 61 to 81 (LLTGFAGLVAGACSMAIGEFI) form a helical membrane-spanning segment. Topologically, residues 82–114 (SVYSQYDIEVAQMKRESGGETKKEKLPSPTQAA) are cytoplasmic. A helical membrane pass occupies residues 115-135 (IASALAFTLGAIVPLLAAAFV). Topologically, residues 136-141 (KEYKVR) are vacuolar. A helical transmembrane segment spans residues 142–162 (IGVIVAAVTLALVMFGWLGAV). The Cytoplasmic segment spans residues 163-174 (LGKAPVVKSLVR). Residues 175 to 195 (VLIGGWLAMAITFGFTKLVGS) form a helical membrane-spanning segment. The Vacuolar segment spans residues 196–198 (HGL).

Belongs to the CCC1 family.

It is found in the vacuole membrane. The catalysed reaction is Fe(2+)(in) = Fe(2+)(out). Probable vacuolar iron transporter that may be involved in the regulation of iron distribution throughout the plant. In Arabidopsis thaliana (Mouse-ear cress), this protein is Vacuolar iron transporter homolog 4.